A 51-amino-acid chain; its full sequence is Large ribosomal subunit protein bL33 (51 aa).

This sequence belongs to the bacterial ribosomal protein bL33 family.

This chain is Large ribosomal subunit protein bL33, found in Francisella philomiragia subsp. philomiragia (strain ATCC 25017 / CCUG 19701 / FSC 153 / O#319-036).